A 713-amino-acid chain; its full sequence is Phenylalanine--tRNA ligase beta subunit (713 aa).

Residues 39 to 153 (IRHVENIKYG…EANLNEDPIA (115 aa)) form the tRNA-binding domain. In terms of domain architecture, B5 spans 379–454 (LKPKEILFDH…RFYGYDNFPI (76 aa)). Residues aspartate 432, aspartate 438, glutamate 441, and glutamate 442 each coordinate Mg(2+).

The protein belongs to the phenylalanyl-tRNA synthetase beta subunit family. Type 1 subfamily. As to quaternary structure, tetramer of two alpha and two beta subunits. Mg(2+) serves as cofactor.

The protein localises to the cytoplasm. The catalysed reaction is tRNA(Phe) + L-phenylalanine + ATP = L-phenylalanyl-tRNA(Phe) + AMP + diphosphate + H(+). This is Phenylalanine--tRNA ligase beta subunit from Mycoplasma mobile (strain ATCC 43663 / 163K / NCTC 11711) (Mesomycoplasma mobile).